The sequence spans 78 residues: Small venom protein 2 (78 aa).

The signal sequence occupies residues 1-19; sequence MKFIVLLGALLALLVAVSA. Residues 20–42 constitute a propeptide that is removed on maturation; the sequence is DRIAREAPEMESVDEAVLTRQAR.

Expressed by the venom gland.

The protein resides in the secreted. The protein is Small venom protein 2 of Pimpla hypochondriaca (Parasitoid wasp).